A 175-amino-acid polypeptide reads, in one-letter code: Inosine/xanthosine triphosphatase (175 aa).

Residue 8 to 13 participates in substrate binding; the sequence is TTNPAK. Mg(2+)-binding residues include D38 and E68. Residue 68-69 participates in substrate binding; sequence EA.

Belongs to the YjjX NTPase family. As to quaternary structure, homodimer. Mg(2+) serves as cofactor. It depends on Mn(2+) as a cofactor.

The enzyme catalyses XTP + H2O = XDP + phosphate + H(+). The catalysed reaction is ITP + H2O = IDP + phosphate + H(+). Its function is as follows. Phosphatase that hydrolyzes non-canonical purine nucleotides such as XTP and ITP to their respective diphosphate derivatives. Probably excludes non-canonical purines from DNA/RNA precursor pool, thus preventing their incorporation into DNA/RNA and avoiding chromosomal lesions. The sequence is that of Inosine/xanthosine triphosphatase from Yersinia enterocolitica serotype O:8 / biotype 1B (strain NCTC 13174 / 8081).